Reading from the N-terminus, the 346-residue chain is Histidinol-phosphate aminotransferase (346 aa).

At Lys-209 the chain carries N6-(pyridoxal phosphate)lysine.

It belongs to the class-II pyridoxal-phosphate-dependent aminotransferase family. Histidinol-phosphate aminotransferase subfamily. As to quaternary structure, homodimer. The cofactor is pyridoxal 5'-phosphate.

The catalysed reaction is L-histidinol phosphate + 2-oxoglutarate = 3-(imidazol-4-yl)-2-oxopropyl phosphate + L-glutamate. It functions in the pathway amino-acid biosynthesis; L-histidine biosynthesis; L-histidine from 5-phospho-alpha-D-ribose 1-diphosphate: step 7/9. In Flavobacterium psychrophilum (strain ATCC 49511 / DSM 21280 / CIP 103535 / JIP02/86), this protein is Histidinol-phosphate aminotransferase.